A 213-amino-acid chain; its full sequence is Orotate phosphoribosyltransferase (213 aa).

Lys26 serves as a coordination point for 5-phospho-alpha-D-ribose 1-diphosphate. 34-35 (FF) is an orotate binding site. 5-phospho-alpha-D-ribose 1-diphosphate-binding positions include 72–73 (YK), Arg98, Lys99, Lys102, and 123–131 (DDVISAGTS). 2 residues coordinate orotate: Ser127 and Arg155.

The protein belongs to the purine/pyrimidine phosphoribosyltransferase family. PyrE subfamily. As to quaternary structure, homodimer. Mg(2+) is required as a cofactor.

It catalyses the reaction orotidine 5'-phosphate + diphosphate = orotate + 5-phospho-alpha-D-ribose 1-diphosphate. The protein operates within pyrimidine metabolism; UMP biosynthesis via de novo pathway; UMP from orotate: step 1/2. In terms of biological role, catalyzes the transfer of a ribosyl phosphate group from 5-phosphoribose 1-diphosphate to orotate, leading to the formation of orotidine monophosphate (OMP). This Neisseria gonorrhoeae (strain ATCC 700825 / FA 1090) protein is Orotate phosphoribosyltransferase.